Reading from the N-terminus, the 315-residue chain is MSTQEPQKSLLGSLNSNATSHLGLATNQSEPWCLYVSIPDGLFLSLGLVSLVENVLVVIAITKNRNLHSPMYYFICCLALSDLMVSVSIVLETTIILLLEAGILVARVALVQQLDNLIDVLICGSMVSSLCFLGIIAIDRYISIFYALRYHSIVTLPRARRAVVGIWMVSIVSSTLFITYYKHTAVLLCLVTFFLAMLALMAILYAHMFTRACQHAQGIAQLHKRRRSIRQGFCLKGAATLTILLGIFFLCWGPFFLHLLLIVLCPQHPTCSCIFKNFNLFLLLIVLSSTVDPLIYAFRSQELRMTLKEVLLCSW.

Residues 1–35 (MSTQEPQKSLLGSLNSNATSHLGLATNQSEPWCLY) lie on the Extracellular side of the membrane. Residues Asn17 and Asn27 are each glycosylated (N-linked (GlcNAc...) asparagine). A helical transmembrane segment spans residues 36-61 (VSIPDGLFLSLGLVSLVENVLVVIAI). Over 62–70 (TKNRNLHSP) the chain is Cytoplasmic. The helical transmembrane segment at 71–91 (MYYFICCLALSDLMVSVSIVL) threads the bilayer. Topologically, residues 92-116 (ETTIILLLEAGILVARVALVQQLDN) are extracellular. The chain crosses the membrane as a helical span at residues 117 to 138 (LIDVLICGSMVSSLCFLGIIAI). Over 139–161 (DRYISIFYALRYHSIVTLPRARR) the chain is Cytoplasmic. A helical transmembrane segment spans residues 162–181 (AVVGIWMVSIVSSTLFITYY). Over 182-189 (KHTAVLLC) the chain is Extracellular. Residues 190-209 (LVTFFLAMLALMAILYAHMF) form a helical membrane-spanning segment. Topologically, residues 210-238 (TRACQHAQGIAQLHKRRRSIRQGFCLKGA) are cytoplasmic. Residues 239–264 (ATLTILLGIFFLCWGPFFLHLLLIVL) form a helical membrane-spanning segment. Residues 265 to 277 (CPQHPTCSCIFKN) are Extracellular-facing. A helical transmembrane segment spans residues 278–298 (FNLFLLLIVLSSTVDPLIYAF). Over 299 to 315 (RSQELRMTLKEVLLCSW) the chain is Cytoplasmic. The S-palmitoyl cysteine moiety is linked to residue Cys313.

Belongs to the G-protein coupled receptor 1 family. As to quaternary structure, interacts with MGRN1, but does not undergo MGRN1-mediated ubiquitination; this interaction competes with GNAS-binding and thus inhibits agonist-induced cAMP production. Interacts with OPN3; the interaction results in a decrease in MC1R-mediated cAMP signaling and ultimately a decrease in melanin production in melanocytes.

Its subcellular location is the cell membrane. Its function is as follows. Receptor for MSH (alpha, beta and gamma) and ACTH. The activity of this receptor is mediated by G proteins which activate adenylate cyclase. Mediates melanogenesis, the production of eumelanin (black/brown) and phaeomelanin (red/yellow), via regulation of cAMP signaling in melanocytes. The sequence is that of Melanocyte-stimulating hormone receptor (Mc1r) from Mus musculus (Mouse).